Here is a 78-residue protein sequence, read N- to C-terminus: Large ribosomal subunit protein bL28 (78 aa).

Residues 1–21 (MARVCQVTGKGPMTGNNVSHA) form a disordered region.

Belongs to the bacterial ribosomal protein bL28 family.

The protein is Large ribosomal subunit protein bL28 of Bordetella petrii (strain ATCC BAA-461 / DSM 12804 / CCUG 43448).